The sequence spans 483 residues: Keratin, type II cytoskeletal 7 (483 aa).

Ser-2 carries the post-translational modification N-acetylserine. A phosphoserine mark is found at Ser-2, Ser-6, and Ser-7. The interval 2–107 is head; that stretch reads SVQFSSQTFS…DPQIQQVRKE (106 aa). The O-linked (GlcNAc) serine glycan is linked to Ser-12. Residues 14–37 form a disordered region; sequence SAAFPRRGGQGRLSSVSSRAGSVS. The residue at position 20 (Arg-20) is a Dimethylated arginine; alternate. Residue Arg-20 is modified to Omega-N-methylarginine; alternate. Low complexity predominate over residues 25 to 37; the sequence is RLSSVSSRAGSVS. A phosphoserine mark is found at Ser-63 and Ser-88. The segment at 107–143 is coil 1A; it reads EEREQIKTLNNKFASFIDKVRFLEQQNQMLETKWRLL. Positions 108 to 420 constitute an IF rod domain; sequence EREQIKTLNN…KLLEGEESRL (313 aa). Residue Thr-114 is modified to Phosphothreonine. The interval 144 to 161 is linker 1; the sequence is QEQKSSKGSSLPAIFEAH. Residue Lys-147 forms a Glycyl lysine isopeptide (Lys-Gly) (interchain with G-Cter in SUMO2) linkage. The tract at residues 162-253 is coil 1B; it reads IANLRRQLDG…TLYEMELNEL (92 aa). N6-acetyllysine is present on Lys-196. A linker 12 region spans residues 254–277; sequence QTQISDTSVVLSMDNSRSLDLDSI. Phosphoserine is present on residues Ser-269 and Ser-271. Residues 278-416 are coil 2; that stretch reads ISEVKAQYED…ATYRKLLEGE (139 aa). Glycyl lysine isopeptide (Lys-Gly) (interchain with G-Cter in SUMO2) cross-links involve residues Lys-282 and Lys-303. Phosphothreonine is present on Thr-306. Residues Lys-313 and Lys-348 each participate in a glycyl lysine isopeptide (Lys-Gly) (interchain with G-Cter in SUMO2) cross-link. The interval 417–483 is tail; that stretch reads ESRLSGDGVG…TSSSRRSVRN (67 aa).

It belongs to the intermediate filament family. Heterotetramer of two type I and two type II keratins. Interacts with eukaryotic translation initiator factor 3 (eIF3) subunit EIF3S10. Interacts with GPER1. In terms of processing, arg-20 is dimethylated, probably to asymmetric dimethylarginine.

In terms of biological role, blocks interferon-dependent interphase and stimulates DNA synthesis in cells. This Potorous tridactylus (Potoroo) protein is Keratin, type II cytoskeletal 7.